The chain runs to 336 residues: DNA-directed RNA polymerase subunit alpha (336 aa).

An alpha N-terminal domain (alpha-NTD) region spans residues 1-235 (MIEFVIPKKL…HFKIVTEGLP (235 aa)). Residues 264-336 (RENSDVYNRK…KFGLELRKGE (73 aa)) are alpha C-terminal domain (alpha-CTD).

It belongs to the RNA polymerase alpha chain family. As to quaternary structure, homodimer. The RNAP catalytic core consists of 2 alpha, 1 beta, 1 beta' and 1 omega subunit. When a sigma factor is associated with the core the holoenzyme is formed, which can initiate transcription.

The catalysed reaction is RNA(n) + a ribonucleoside 5'-triphosphate = RNA(n+1) + diphosphate. DNA-dependent RNA polymerase catalyzes the transcription of DNA into RNA using the four ribonucleoside triphosphates as substrates. In Thermotoga maritima (strain ATCC 43589 / DSM 3109 / JCM 10099 / NBRC 100826 / MSB8), this protein is DNA-directed RNA polymerase subunit alpha.